Reading from the N-terminus, the 252-residue chain is MSGGEKEMPTNKERSPRYNRILLKLSGEALAGEEGFGIDPKVLDAISLEIGQLVGIGVQVGLVVGGGNLFRGAALQSAGLDRVAGDHMGMLATVMNGLALRDALERSNIRTRLMSAIPMSGVVEHYDHRNANRHLKNGEVVIFCAGTGNPFFTTDSAACLRGIEISADVVLKATKVDGVYNDDPVKNPDAVKYDALTYDEVLEKKLGVMDLTAICLCRDHSMPLRVFDMNKKGALLNLMLGGKEGTLVEAAQ.

An ATP-binding site is contributed by 24-27 (KLSG). The involved in allosteric activation by GTP stretch occupies residues 32–37 (GEEGFG). Gly66 is a binding site for UMP. Gly67 and Arg71 together coordinate ATP. Residues Asp86 and 147-154 (TGNPFFTT) contribute to the UMP site. Residues Thr174, Tyr180, and Asp183 each coordinate ATP.

The protein belongs to the UMP kinase family. In terms of assembly, homohexamer.

Its subcellular location is the cytoplasm. The enzyme catalyses UMP + ATP = UDP + ADP. It participates in pyrimidine metabolism; CTP biosynthesis via de novo pathway; UDP from UMP (UMPK route): step 1/1. Allosterically activated by GTP. Inhibited by UTP. In terms of biological role, catalyzes the reversible phosphorylation of UMP to UDP. This chain is Uridylate kinase, found in Alcanivorax borkumensis (strain ATCC 700651 / DSM 11573 / NCIMB 13689 / SK2).